Consider the following 261-residue polypeptide: MTHQTHAYHMVNPSPWPLTGALSALLMTSGLIMWFHFNSTTLLMLGLTTNMLTMYQWWRDVIRESTFQGHHTPNVQKGLRYGMILFIISEVLFFTGFFWAFYHSSLAPTPELGGCWPPTGIHPLNPLEVPLLNTSVLLASGVSITWAHHSLMEGNRNHMLQALFITIALGVYFTLLQASEYYEAPFTISDGVYGSTFFVATGFHGLHVIIGSTFLIVCFFRQLKFHFTSSHHFGFEAAAWYWHFVDVVWLFLYVSIYWWGS.

The Mitochondrial matrix segment spans residues 1–15 (MTHQTHAYHMVNPSP). A helical transmembrane segment spans residues 16–34 (WPLTGALSALLMTSGLIMW). The Mitochondrial intermembrane segment spans residues 35–40 (FHFNST). The helical transmembrane segment at 41 to 66 (TLLMLGLTTNMLTMYQWWRDVIREST) threads the bilayer. The Mitochondrial matrix portion of the chain corresponds to 67 to 72 (FQGHHT). The helical transmembrane segment at 73–105 (PNVQKGLRYGMILFIISEVLFFTGFFWAFYHSS) threads the bilayer. Over 106-128 (LAPTPELGGCWPPTGIHPLNPLE) the chain is Mitochondrial intermembrane. A helical transmembrane segment spans residues 129-152 (VPLLNTSVLLASGVSITWAHHSLM). The Mitochondrial matrix portion of the chain corresponds to 153–155 (EGN). A helical transmembrane segment spans residues 156 to 183 (RNHMLQALFITIALGVYFTLLQASEYYE). The Mitochondrial intermembrane portion of the chain corresponds to 184–190 (APFTISD). A helical transmembrane segment spans residues 191–223 (GVYGSTFFVATGFHGLHVIIGSTFLIVCFFRQL). Residues 224-232 (KFHFTSSHH) lie on the Mitochondrial matrix side of the membrane. The helical transmembrane segment at 233 to 256 (FGFEAAAWYWHFVDVVWLFLYVSI) threads the bilayer. The Mitochondrial intermembrane segment spans residues 257–261 (YWWGS).

This sequence belongs to the cytochrome c oxidase subunit 3 family. Component of the cytochrome c oxidase (complex IV, CIV), a multisubunit enzyme composed of 14 subunits. The complex is composed of a catalytic core of 3 subunits MT-CO1, MT-CO2 and MT-CO3, encoded in the mitochondrial DNA, and 11 supernumerary subunits COX4I, COX5A, COX5B, COX6A, COX6B, COX6C, COX7A, COX7B, COX7C, COX8 and NDUFA4, which are encoded in the nuclear genome. The complex exists as a monomer or a dimer and forms supercomplexes (SCs) in the inner mitochondrial membrane with NADH-ubiquinone oxidoreductase (complex I, CI) and ubiquinol-cytochrome c oxidoreductase (cytochrome b-c1 complex, complex III, CIII), resulting in different assemblies (supercomplex SCI(1)III(2)IV(1) and megacomplex MCI(2)III(2)IV(2)).

It is found in the mitochondrion inner membrane. It carries out the reaction 4 Fe(II)-[cytochrome c] + O2 + 8 H(+)(in) = 4 Fe(III)-[cytochrome c] + 2 H2O + 4 H(+)(out). Its function is as follows. Component of the cytochrome c oxidase, the last enzyme in the mitochondrial electron transport chain which drives oxidative phosphorylation. The respiratory chain contains 3 multisubunit complexes succinate dehydrogenase (complex II, CII), ubiquinol-cytochrome c oxidoreductase (cytochrome b-c1 complex, complex III, CIII) and cytochrome c oxidase (complex IV, CIV), that cooperate to transfer electrons derived from NADH and succinate to molecular oxygen, creating an electrochemical gradient over the inner membrane that drives transmembrane transport and the ATP synthase. Cytochrome c oxidase is the component of the respiratory chain that catalyzes the reduction of oxygen to water. Electrons originating from reduced cytochrome c in the intermembrane space (IMS) are transferred via the dinuclear copper A center (CU(A)) of subunit 2 and heme A of subunit 1 to the active site in subunit 1, a binuclear center (BNC) formed by heme A3 and copper B (CU(B)). The BNC reduces molecular oxygen to 2 water molecules using 4 electrons from cytochrome c in the IMS and 4 protons from the mitochondrial matrix. The chain is Cytochrome c oxidase subunit 3 (MT-CO3) from Gazella bennettii (Chinkara).